Reading from the N-terminus, the 163-residue chain is uncharacterized protein (163 aa).

Belongs to the LcrH/SycD chaperone family.

This is an uncharacterized protein from Escherichia coli (strain K12).